Here is a 2169-residue protein sequence, read N- to C-terminus: Protein sidekick-1 (2169 aa).

The first 50 residues, 1-50 (MVGRKVDREIIARRNSRRDGMMMKLNFCFFFCRRWWAFLLLQLHMLQALA), serve as a signal peptide directing secretion. Topologically, residues 51-1961 (QDDVAPYFKT…TEAPFYEEWW (1911 aa)) are extracellular. Ig-like C2-type domains lie at 56–138 (PYFK…SEVQ), 143–229 (GNFM…SPLI), 245–333 (PIIV…AFIS), 338–428 (PYFT…LDVT), and 432–521 (PAFI…VMLT). A disulfide bond links C78 and C121. N-linked (GlcNAc...) asparagine glycosylation is found at N93, N223, and N253. 3 cysteine pairs are disulfide-bonded: C267–C314, C360–C410, and C453–C505. Residues N502, N524, and N534 are each glycosylated (N-linked (GlcNAc...) asparagine). The Ig-like C2-type 6 domain maps to 525–615 (RTFIVHPPEN…GNDSRMARLE (91 aa)). An intrachain disulfide couples C547 to C599. N607, N631, N734, N773, N834, N967, and N977 each carry an N-linked (GlcNAc...) asparagine glycan. Fibronectin type-III domains follow at residues 622–718 (SPQN…LPEE), 723–819 (PPKN…TLQG), 824–922 (PPQN…TLED), 926–1020 (AVGH…VPPE), 1024–1123 (APSN…TLQA), 1128–1226 (APGS…TRES), 1231–1328 (PPEN…TKDD), 1332–1426 (PPIR…TEKR), 1431–1528 (PPQQ…TLQD), 1533–1651 (PPSS…VGEA), 1656–1752 (APQN…THQA), 1756–1851 (APSF…AGPA), and 1854–1955 (SPGS…TEAP). N-linked (GlcNAc...) asparagine glycosylation is found at N1234 and N1285. The interval 1423–1443 (TEKRERPAPPQQLTTPQSDVS) is disordered. Polar residues predominate over residues 1433–1443 (QQLTTPQSDVS). N-linked (GlcNAc...) asparagine glycans are attached at residues N1606, N1700, N1719, N1771, and N1845. The helical transmembrane segment at 1962 to 1982 (FLLVMALSSLILILLVVFALV) threads the bilayer. Over 1983–2169 (LHGQSKKYKN…TPVTGFSSFV (187 aa)) the chain is Cytoplasmic. Disordered stretches follow at residues 2028-2050 (TFSKKNGTRSPPRPSPGGLHYSD) and 2145-2169 (GGVYTPTGQPAPGSRTPVTGFSSFV). The segment covering 2160–2169 (TPVTGFSSFV) has biased composition (polar residues). The short motif at 2163-2169 (TGFSSFV) is the PDZ-binding element.

The protein belongs to the sidekick family. Homodimer; mediates homophilic interactions to promote cell adhesion. As to expression, expressed by non-overlapping subsets of retinal neurons. SDK1, SDK2, DSCAM and DSCAML1 are expressed in non-overlapping subsets of interneurons and retinal ganglion cells (RGCs) that form synapses in distinct inner plexiform layer (IPL) sublaminae.

Its subcellular location is the cell membrane. It is found in the synapse. Its function is as follows. Adhesion molecule that promotes lamina-specific synaptic connections in the retina. Expressed in specific subsets of interneurons and retinal ganglion cells (RGCs) and promotes synaptic connectivity via homophilic interactions. The polypeptide is Protein sidekick-1 (Gallus gallus (Chicken)).